We begin with the raw amino-acid sequence, 147 residues long: Large ribosomal subunit protein uL15 (147 aa).

Over residues 1–20 (MTLRLNDLKPADGARTERTR) the composition is skewed to basic and acidic residues. Positions 1–61 (MTLRLNDLKP…GFEGGQTPMQ (61 aa)) are disordered. Gly residues predominate over residues 23–33 (RGIGSGLGKTA). The span at 34–47 (GRGHKGSFARKGGG) shows a compositional bias: basic residues.

Belongs to the universal ribosomal protein uL15 family. Part of the 50S ribosomal subunit.

In terms of biological role, binds to the 23S rRNA. This chain is Large ribosomal subunit protein uL15, found in Xanthomonas euvesicatoria pv. vesicatoria (strain 85-10) (Xanthomonas campestris pv. vesicatoria).